Here is a 332-residue protein sequence, read N- to C-terminus: 2,3-diketo-L-gulonate reductase (332 aa).

Catalysis depends on His-44, which acts as the Proton donor. NAD(+)-binding positions include 168–174 (ITMVDMS), 224–225 (WK), and 304–306 (GHE).

It belongs to the LDH2/MDH2 oxidoreductase family. DlgD subfamily. Homodimer.

It is found in the cytoplasm. It carries out the reaction 3-dehydro-L-gulonate + NAD(+) = 2,3-dioxo-L-gulonate + NADH + H(+). The catalysed reaction is 3-dehydro-L-gulonate + NADP(+) = 2,3-dioxo-L-gulonate + NADPH + H(+). Its function is as follows. Catalyzes the reduction of 2,3-diketo-L-gulonate in the presence of NADH, to form 3-keto-L-gulonate. The polypeptide is 2,3-diketo-L-gulonate reductase (Escherichia coli (strain K12 / MC4100 / BW2952)).